Reading from the N-terminus, the 102-residue chain is Probable non-specific lipid-transfer protein (102 aa).

An N-terminal signal peptide occupies residues 1 to 35 (MAMAMGMAMRKEAAVAVMMVMVVTLAAGADAGAGA). 4 disulfides stabilise this stretch: C37–C71, C45–C59, C60–C95, and C69–C102.

The protein belongs to the plant LTP family. B11E subfamily. In terms of tissue distribution, aleurone.

Functionally, potential phospholipid transfer protein. This is Probable non-specific lipid-transfer protein (LTP2) from Hordeum vulgare (Barley).